The primary structure comprises 234 residues: MSNLRTLVFYATPEHPCSYLDDRLATTMFVDPKADINLDLYTRLSQLGFRRSGNHYYKPRCNGCNACIAVRIPTEEFNRTRSQERTWKRNSDLTVRLRSAQFEQEHFALYQRYISARHQDGDMYPPTLDQYESFLLEARSETLFIEFRKDSKLLAIAVTDRTTDGLSAIYTFFDPNEDKRALGVYAILWQLQFAREQRLPYLYLGYWIRGCRKMSYKTNYRPIQVLVRDSWITI.

The protein belongs to the R-transferase family. Bpt subfamily.

The protein resides in the cytoplasm. It catalyses the reaction N-terminal L-glutamyl-[protein] + L-leucyl-tRNA(Leu) = N-terminal L-leucyl-L-glutamyl-[protein] + tRNA(Leu) + H(+). The enzyme catalyses N-terminal L-aspartyl-[protein] + L-leucyl-tRNA(Leu) = N-terminal L-leucyl-L-aspartyl-[protein] + tRNA(Leu) + H(+). Functions in the N-end rule pathway of protein degradation where it conjugates Leu from its aminoacyl-tRNA to the N-termini of proteins containing an N-terminal aspartate or glutamate. This is Aspartate/glutamate leucyltransferase from Hahella chejuensis (strain KCTC 2396).